A 459-amino-acid polypeptide reads, in one-letter code: 4,4'-diaponeurosporen-aldehyde dehydrogenase (459 aa).

NAD(+) contacts are provided by residues 114 to 115 (FN) and 188 to 189 (GS). The Proton acceptor role is filled by Glu210. Residue Met211 coordinates NAD(+). The active-site Nucleophile is the Cys244. Position 336 (Glu336) interacts with NAD(+).

Belongs to the aldehyde dehydrogenase family.

It catalyses the reaction 4,4'-diaponeurosporenal + NAD(+) + H2O = 4,4'-diaponeurosporenoate + NADH + 2 H(+). It participates in carotenoid biosynthesis; staphyloxanthin biosynthesis; staphyloxanthin from farnesyl diphosphate. Its function is as follows. Involved in the biosynthesis of the yellow-orange carotenoid staphyloxanthin, which plays a role in the virulence via its protective function against oxidative stress. Catalyzes the oxidation of 4,4'-diaponeurosporen-4-al to yield 4,4'-diaponeurosporenoic acid. This chain is 4,4'-diaponeurosporen-aldehyde dehydrogenase, found in Staphylococcus aureus (strain NCTC 8325 / PS 47).